A 391-amino-acid polypeptide reads, in one-letter code: Na(+)/H(+) antiporter NhaA (391 aa).

Transmembrane regions (helical) follow at residues 14-34 (AGGI…NSPL), 59-79 (LLLW…GLEV), 95-115 (SLPS…YLLF), 124-144 (AGWA…MALL), 154-174 (VFLL…IALF), 177-197 (SDLS…LVGL), 213-233 (LILW…GVII), 261-281 (FLIL…NMSL), 290-310 (IGIA…FSFI), 328-348 (IAPV…IASL), and 363-383 (LGTL…LSKV).

It belongs to the NhaA Na(+)/H(+) (TC 2.A.33) antiporter family.

It localises to the cell inner membrane. The catalysed reaction is Na(+)(in) + 2 H(+)(out) = Na(+)(out) + 2 H(+)(in). Na(+)/H(+) antiporter that extrudes sodium in exchange for external protons. This chain is Na(+)/H(+) antiporter NhaA, found in Shewanella putrefaciens (strain CN-32 / ATCC BAA-453).